We begin with the raw amino-acid sequence, 653 residues long: uncharacterized protein (653 aa).

The next 2 membrane-spanning stretches (helical) occupy residues 39-59 (AMTT…LKLI) and 207-227 (AVFV…AFTI). One can recognise an HAMP domain in the interval 225 to 277 (FTITKPIRELLTGVKNIASGDFHQRISLPFGGELGALIFNFNEMAERLEKYEQ). The 71-residue stretch at 286–356 (EKAKLETLVS…PALNDIVRKN (71 aa)) folds into the PAS domain. The Histidine kinase domain occupies 421–651 (NVSHELRTPL…CFFFDLIIAK (231 aa)). Position 424 is a phosphohistidine; by autocatalysis (His424).

The protein localises to the plastid. It localises to the chloroplast membrane. It catalyses the reaction ATP + protein L-histidine = ADP + protein N-phospho-L-histidine.. This is an uncharacterized protein from Pyropia yezoensis (Susabi-nori).